The chain runs to 374 residues: MGLLVFVRNLLLALCLFLVLGFLYYSAWKLHLLQWEDSNSLILSLDSAGQTLGTEYDRLGFLLKLDSKLPAELATKYANFSEGACKPGYASAMMTAIFPRFSKPAPMFLDDSFRKWARIREFVPPFGIKGQDNLIKAILSVTKEYRLTPALDSLHCRRCIIVGNGGVLANKSLGSRIDDYDIVIRLNSAPVKGFEKDVGSKTTLRITYPEGAMQRPEQYERDSLFVLAGFKWQDFKWLKYIVYKERVSASDGFWKSVATRVPKEPPEIRILNPYFIQEAAFTLIGLPFNNGLMGRGNIPTLGSVAVTMALDGCDEVAVAGFGYDMNTPNAPLHYYETVRMAAIKESWTHNIQREKEFLRKLVKARVITDLSSGI.

At 1-8 (MGLLVFVR) the chain is on the cytoplasmic side. The helical; Signal-anchor for type II membrane protein transmembrane segment at 9 to 28 (NLLLALCLFLVLGFLYYSAW) threads the bilayer. The Lumenal segment spans residues 29–374 (KLHLLQWEDS…RVITDLSSGI (346 aa)). N-linked (GlcNAc...) asparagine glycans are attached at residues Asn-79 and Asn-170. A disulfide bond links Cys-159 and Cys-313.

This sequence belongs to the glycosyltransferase 29 family. The soluble form derives from the membrane form by proteolytic processing. As to expression, found in all tissues tested. High expression found in brain, liver, kidney, colon, heart and lung.

It localises to the golgi apparatus. It is found in the golgi stack membrane. The protein resides in the secreted. It carries out the reaction a beta-D-galactosyl-(1-&gt;4)-N-acetyl-beta-D-glucosaminyl derivative + CMP-N-acetyl-beta-neuraminate = an N-acetyl-alpha-neuraminyl-(2-&gt;3)-beta-D-galactosyl-(1-&gt;4)-N-acetyl-beta-D-glucosaminyl derivative + CMP + H(+). The protein operates within protein modification; protein glycosylation. Functionally, catalyzes the formation of the NeuAc-alpha-2,3-Gal-beta-1,4-GlcNAc-, NeuAc-alpha-2,3-Gal-beta-1,3-GlcNAc- and NeuAc-alpha-2,3-Gal-beta-1,3-GalNAc- sequences found in terminal carbohydrate groups of glycoproteins and glycolipids. The highest activity is toward Gal-beta-1,3-GlcNAc and the lowest toward Gal-beta-1,3-GalNAc. This Rattus norvegicus (Rat) protein is CMP-N-acetylneuraminate-beta-1,4-galactoside alpha-2,3-sialyltransferase (St3gal3).